The primary structure comprises 631 residues: Probable methyltransferase PMT16 (631 aa).

The Cytoplasmic segment spans residues 1–14 (MNLFTRISSRTKKA). Residues 15 to 35 (NLYYVTLVALLCIASYLLGIW) form a helical; Signal-anchor for type II membrane protein membrane-spanning segment. At 36–631 (QNTAVNPRAA…EDKNNTSALS (596 aa)) the chain is on the lumenal side. N-linked (GlcNAc...) asparagine glycosylation is found at Asn61, Asn230, and Asn626.

The protein belongs to the methyltransferase superfamily.

Its subcellular location is the endoplasmic reticulum membrane. The protein is Probable methyltransferase PMT16 of Arabidopsis thaliana (Mouse-ear cress).